Reading from the N-terminus, the 289-residue chain is Proteasome subunit beta (289 aa).

A propeptide spans Met-1–Ala-55 (removed in mature form; by autocatalysis). The active-site Nucleophile is the Thr-56.

This sequence belongs to the peptidase T1B family. As to quaternary structure, the 20S proteasome core is composed of 14 alpha and 14 beta subunits that assemble into four stacked heptameric rings, resulting in a barrel-shaped structure. The two inner rings, each composed of seven catalytic beta subunits, are sandwiched by two outer rings, each composed of seven alpha subunits. The catalytic chamber with the active sites is on the inside of the barrel. Has a gated structure, the ends of the cylinder being occluded by the N-termini of the alpha-subunits. Is capped by the proteasome-associated ATPase, ARC.

Its subcellular location is the cytoplasm. It carries out the reaction Cleavage of peptide bonds with very broad specificity.. Its pathway is protein degradation; proteasomal Pup-dependent pathway. With respect to regulation, the formation of the proteasomal ATPase ARC-20S proteasome complex, likely via the docking of the C-termini of ARC into the intersubunit pockets in the alpha-rings, may trigger opening of the gate for substrate entry. Interconversion between the open-gate and close-gate conformations leads to a dynamic regulation of the 20S proteasome proteolysis activity. Functionally, component of the proteasome core, a large protease complex with broad specificity involved in protein degradation. The sequence is that of Proteasome subunit beta from Mycobacterium marinum (strain ATCC BAA-535 / M).